The chain runs to 585 residues: MENLQSMPEVQKIISLGKANGEVSYDDINEILPDKILNSEKIDDFFTLLHEMGIEIVEEYTRNTLEPASTLVPKDDSKPARKKKESSASTSGSEDPIKLYLREIGKVSLISGETEVFLAKRIEKGEKIIEETILSSSILRANYIKLLPKIRSKKIKVYDLIRVDKMYALNAEEAHKLEELFFKNILVIQEQEKVLQEAVSKIRKYSETSKKYKEFKEKIDASTEIIHNAIRELGVSQKEIQKISQKIKSMVFRIKEIDRHFLKIKAQYGQDVRDIKAFNRFIEKNEKLDDIEVKMGVNIDEVREVIKDIRNNERKLRRMEQEAGSTVQEIKDWGEKIIKGEREISQAKKELVKANLRLVVSIAKRYANRGMHFFDLIQEGNIGLIKAVDKFEYKKGYKFSTYATWWIRQAITRAISDQARTIRVPVHMIEQVNKVIRETRLFIQEFGRDPNNEEIAERLGWPVQKVKMVKNVAREPISLEIPVGSEEDSELGDFIPDTEVETPVNAAASSILAEQIRQVLHTLPAREQKVIRMRFGLDDGYPQTLEEVGYQFKVTRERIRQIEAKALRRLRHPSRSKKLKDYIDG.

Residues 67–93 (PASTLVPKDDSKPARKKKESSASTSGS) are disordered. Positions 351–421 (LVKANLRLVV…TRAISDQART (71 aa)) are sigma-70 factor domain-2. Positions 375–378 (DLIQ) match the Interaction with polymerase core subunit RpoC motif. A sigma-70 factor domain-3 region spans residues 430 to 506 (EQVNKVIRET…DTEVETPVNA (77 aa)). The interval 519–572 (VLHTLPAREQKVIRMRFGLDDGYPQTLEEVGYQFKVTRERIRQIEAKALRRLRH) is sigma-70 factor domain-4. Positions 545 to 564 (LEEVGYQFKVTRERIRQIEA) form a DNA-binding region, H-T-H motif.

This sequence belongs to the sigma-70 factor family. RpoD/SigA subfamily. As to quaternary structure, interacts transiently with the RNA polymerase catalytic core.

Its subcellular location is the cytoplasm. Sigma factors are initiation factors that promote the attachment of RNA polymerase to specific initiation sites and are then released. This sigma factor is the primary sigma factor during exponential growth. The polypeptide is RNA polymerase sigma factor RpoD (Leptospira interrogans serogroup Icterohaemorrhagiae serovar copenhageni (strain Fiocruz L1-130)).